Consider the following 468-residue polypeptide: Na(+)/H(+) antiporter NhaA 2 (468 aa).

A run of 11 helical transmembrane segments spans residues 31–51, 82–102, 118–138, 147–167, 176–196, 199–219, 226–246, 321–341, 353–373, 393–413, and 422–442; these read FLHV…VALA, LHFW…GLEI, VLPV…YLAL, GWGV…ALLG, VLLL…IAVF, SSIS…VLAL, SPVV…SAGV, PWVA…VSLG, LLLG…MVAC, VLVV…VAGL, and GVAK…AMAV.

The protein belongs to the NhaA Na(+)/H(+) (TC 2.A.33) antiporter family.

The protein localises to the cell inner membrane. It carries out the reaction Na(+)(in) + 2 H(+)(out) = Na(+)(out) + 2 H(+)(in). Na(+)/H(+) antiporter that extrudes sodium in exchange for external protons. In Sorangium cellulosum (strain So ce56) (Polyangium cellulosum (strain So ce56)), this protein is Na(+)/H(+) antiporter NhaA 2.